The following is a 269-amino-acid chain: Type II iodothyronine deiodinase (269 aa).

Residues 1 to 7 (MGLLSVD) lie on the Lumenal side of the membrane. The helical; Signal-anchor for type III membrane protein transmembrane segment at 8-28 (LLITLQILPWFFSNCLFLALY) threads the bilayer. Over 29-269 (DSVVLLKHVI…RUVPTCELIM (241 aa)) the chain is Cytoplasmic. U128 is a catalytic residue. 2 non-standard amino acids (selenocysteine) are found at residues U128 and U261.

Belongs to the iodothyronine deiodinase family. Predominantly monomer. Can form homodimers but homodimerization is not essential for enzyme activity.

Its subcellular location is the endoplasmic reticulum membrane. It carries out the reaction 3,3',5-triiodo-L-thyronine + iodide + A + H(+) = L-thyroxine + AH2. The catalysed reaction is 3,3'-diiodo-L-thyronine + iodide + A + H(+) = 3,3',5'-triiodo-L-thyronine + AH2. The enzyme catalyses 3'-iodo-L-thyronine + iodide + A + H(+) = 3',5'-diiodo-L-thyronine + AH2. It catalyses the reaction 3,3'-diiodothyronamine + iodide + A + H(+) = 3,3',5'-triiodothyronamine + AH2. It carries out the reaction 3'-iodothyronamine + iodide + A + H(+) = 3',5'-diiodothyronamine + AH2. Functionally, plays a crucial role in the metabolism of thyroid hormones (TH) and has specific roles in TH activation and inactivation by deiodination. Catalyzes the deiodination of L-thyroxine (T4) to 3,5,3'-triiodothyronine (T3), 3,3',5'-triiodothyronine (rT3) to 3,3'-diiodothyronine (3,3'-T2) and 3',5'-diiodothyronine (3',5'-T2) to 3'-monoiodothyronine (3'-T1) via outer-ring deiodination (ORD). Catalyzes the phenolic ring deiodinations of 3,3',5'-triiodothyronamine and 3',5'- diiodothyronamine. This chain is Type II iodothyronine deiodinase (dio2), found in Neoceratodus forsteri (Australian lungfish).